Reading from the N-terminus, the 581-residue chain is Peptidyl-prolyl cis-trans isomerase FKBP10 (581 aa).

Positions 1–33 (MFLVGSSSHTLHRLRILPLLLLLQTLERGLGRA) are cleaved as a signal peptide. PPIase FKBP-type domains are found at residues 61–149 (GDFV…LDVW), 173–261 (SDFV…LDVH), and 285–373 (GDFM…IDFH). N-linked (GlcNAc...) asparagine glycosylation is found at asparagine 69, asparagine 181, asparagine 293, asparagine 309, asparagine 351, asparagine 392, and asparagine 406. Residues 398-485 (GDFIRYHYNC…LFEVELVSRE (88 aa)) enclose the PPIase FKBP-type 4 domain. 2 EF-hand domains span residues 496–531 (WYQD…QVNE) and 541–576 (DPDK…DQER). Aspartate 509, asparagine 511, aspartate 513, glutamate 515, glutamate 520, aspartate 554, asparagine 556, aspartate 558, lysine 560, and glutamate 565 together coordinate Ca(2+). The segment at 533–581 (KGRLMPGQDPDKTISDMFQNQDRNQDGKITAEELKLKSDEDQERVHEEL) is disordered. The span at 555–581 (RNQDGKITAEELKLKSDEDQERVHEEL) shows a compositional bias: basic and acidic residues. The Prevents secretion from ER signature appears at 578-581 (HEEL).

In terms of processing, N-glycosylated. Post-translationally, phosphorylated. In terms of tissue distribution, expressed in aorta, brain, heart, kidney, lung, spleen and testis. Not detected in liver.

The protein resides in the endoplasmic reticulum lumen. It carries out the reaction [protein]-peptidylproline (omega=180) = [protein]-peptidylproline (omega=0). With respect to regulation, inhibited by both FK506 and rapamycin, but not by cyclosporin A. PPIases accelerate the folding of proteins during protein synthesis. This Mus musculus (Mouse) protein is Peptidyl-prolyl cis-trans isomerase FKBP10 (Fkbp10).